Reading from the N-terminus, the 241-residue chain is tRNA pseudouridine synthase A (241 aa).

D52 acts as the Nucleophile in catalysis. Y111 provides a ligand contact to substrate.

This sequence belongs to the tRNA pseudouridine synthase TruA family. In terms of assembly, homodimer.

The catalysed reaction is uridine(38/39/40) in tRNA = pseudouridine(38/39/40) in tRNA. Formation of pseudouridine at positions 38, 39 and 40 in the anticodon stem and loop of transfer RNAs. The protein is tRNA pseudouridine synthase A of Ureaplasma urealyticum serovar 10 (strain ATCC 33699 / Western).